The following is a 337-amino-acid chain: Holliday junction branch migration complex subunit RuvB (337 aa).

Positions 1 to 182 (MSEEKSVLRD…FGAVFRLSYY (182 aa)) are large ATPase domain (RuvB-L). ATP-binding positions include Leu21, Arg22, Gly63, Lys66, Thr67, Thr68, 129–131 (EDY), Arg172, Tyr182, and Arg219. Thr67 is a binding site for Mg(2+). The segment at 183-253 (KLEEIKQIVR…ITQLALTKLG (71 aa)) is small ATPAse domain (RuvB-S). Residues 256–337 (HKGLDASDYL…VKYYKGLLDN (82 aa)) form a head domain (RuvB-H) region. The DNA site is built by Arg311 and Arg316.

The protein belongs to the RuvB family. As to quaternary structure, homohexamer. Forms an RuvA(8)-RuvB(12)-Holliday junction (HJ) complex. HJ DNA is sandwiched between 2 RuvA tetramers; dsDNA enters through RuvA and exits via RuvB. An RuvB hexamer assembles on each DNA strand where it exits the tetramer. Each RuvB hexamer is contacted by two RuvA subunits (via domain III) on 2 adjacent RuvB subunits; this complex drives branch migration. In the full resolvosome a probable DNA-RuvA(4)-RuvB(12)-RuvC(2) complex forms which resolves the HJ.

It localises to the cytoplasm. It catalyses the reaction ATP + H2O = ADP + phosphate + H(+). The RuvA-RuvB-RuvC complex processes Holliday junction (HJ) DNA during genetic recombination and DNA repair, while the RuvA-RuvB complex plays an important role in the rescue of blocked DNA replication forks via replication fork reversal (RFR). RuvA specifically binds to HJ cruciform DNA, conferring on it an open structure. The RuvB hexamer acts as an ATP-dependent pump, pulling dsDNA into and through the RuvAB complex. RuvB forms 2 homohexamers on either side of HJ DNA bound by 1 or 2 RuvA tetramers; 4 subunits per hexamer contact DNA at a time. Coordinated motions by a converter formed by DNA-disengaged RuvB subunits stimulates ATP hydrolysis and nucleotide exchange. Immobilization of the converter enables RuvB to convert the ATP-contained energy into a lever motion, pulling 2 nucleotides of DNA out of the RuvA tetramer per ATP hydrolyzed, thus driving DNA branch migration. The RuvB motors rotate together with the DNA substrate, which together with the progressing nucleotide cycle form the mechanistic basis for DNA recombination by continuous HJ branch migration. Branch migration allows RuvC to scan DNA until it finds its consensus sequence, where it cleaves and resolves cruciform DNA. The polypeptide is Holliday junction branch migration complex subunit RuvB (Acholeplasma laidlawii (strain PG-8A)).